The primary structure comprises 200 residues: Snake venom metalloproteinase hemorrhagic factor 2 (200 aa).

One can recognise a Peptidase M12B domain in the interval 4 to 200 (KYIELVVVAD…RKPQCILNKP (197 aa)). Glutamate 7 serves as a coordination point for Ca(2+). An N-linked (GlcNAc...) asparagine glycan is attached at asparagine 70. Aspartate 91 is a binding site for Ca(2+). Cystine bridges form between cysteine 115–cysteine 195, cysteine 155–cysteine 179, and cysteine 157–cysteine 162. Residue histidine 140 coordinates Zn(2+). The active site involves glutamate 141. Positions 144 and 150 each coordinate Zn(2+). Cysteine 195 and asparagine 198 together coordinate Ca(2+).

It belongs to the venom metalloproteinase (M12B) family. P-I subfamily. Monomer. The cofactor is Zn(2+). Expressed by the venom gland.

The protein localises to the secreted. Its function is as follows. Snake venom zinc metalloproteinase that induces weak hemorrhage and mild myonecrosis. Shows mild myotoxicity by killing myocytes. Also induces edema in the mouse footpad at doses where hemorrhage is absent. In vitro, degrades laminin, fibronectin, and type IV collagen, suggesting this toxin play a role in local tissue damage by degrading extracellular matrix, and possibly by degrading muscle extracellular matrix. Hemorrhage is not due to cytotoxicity towards endothelial cells in culture, and may only play a minor role in local bleeding characteristic of L.muta envenomations. Also induces the synthesis of several endogenous matrix metalloproteinases, which in turn, may participate in extracellular matrix degradation. In Lachesis muta muta (Bushmaster), this protein is Snake venom metalloproteinase hemorrhagic factor 2.